A 222-amino-acid chain; its full sequence is Protein-L-isoaspartate O-methyltransferase (222 aa).

S69 is an active-site residue.

Belongs to the methyltransferase superfamily. L-isoaspartyl/D-aspartyl protein methyltransferase family.

Its subcellular location is the cytoplasm. The catalysed reaction is [protein]-L-isoaspartate + S-adenosyl-L-methionine = [protein]-L-isoaspartate alpha-methyl ester + S-adenosyl-L-homocysteine. Its function is as follows. Catalyzes the methyl esterification of L-isoaspartyl residues in peptides and proteins that result from spontaneous decomposition of normal L-aspartyl and L-asparaginyl residues. It plays a role in the repair and/or degradation of damaged proteins. This chain is Protein-L-isoaspartate O-methyltransferase, found in Nitrosomonas europaea (strain ATCC 19718 / CIP 103999 / KCTC 2705 / NBRC 14298).